The chain runs to 265 residues: Indole-3-glycerol phosphate synthase (265 aa).

Belongs to the TrpC family.

It carries out the reaction 1-(2-carboxyphenylamino)-1-deoxy-D-ribulose 5-phosphate + H(+) = (1S,2R)-1-C-(indol-3-yl)glycerol 3-phosphate + CO2 + H2O. Its pathway is amino-acid biosynthesis; L-tryptophan biosynthesis; L-tryptophan from chorismate: step 4/5. The polypeptide is Indole-3-glycerol phosphate synthase (Syntrophobacter fumaroxidans (strain DSM 10017 / MPOB)).